A 450-amino-acid chain; its full sequence is tRNA modification GTPase MnmE (450 aa).

Positions 23, 80, and 123 each coordinate (6S)-5-formyl-5,6,7,8-tetrahydrofolate. The TrmE-type G domain maps to 219 to 372 (GLHVVLAGKP…LRQRLLQLAG (154 aa)). N229 serves as a coordination point for K(+). GTP-binding positions include 229 to 234 (NVGKSS), 248 to 254 (TPIAGTT), 273 to 276 (DTAG), and 353 to 355 (SAR). S233 provides a ligand contact to Mg(2+). K(+) is bound by residues T248, I250, and T253. Residue T254 participates in Mg(2+) binding. Residue K450 coordinates (6S)-5-formyl-5,6,7,8-tetrahydrofolate.

It belongs to the TRAFAC class TrmE-Era-EngA-EngB-Septin-like GTPase superfamily. TrmE GTPase family. Homodimer. Heterotetramer of two MnmE and two MnmG subunits. Requires K(+) as cofactor.

The protein resides in the cytoplasm. Exhibits a very high intrinsic GTPase hydrolysis rate. Involved in the addition of a carboxymethylaminomethyl (cmnm) group at the wobble position (U34) of certain tRNAs, forming tRNA-cmnm(5)s(2)U34. The protein is tRNA modification GTPase MnmE of Bordetella bronchiseptica (strain ATCC BAA-588 / NCTC 13252 / RB50) (Alcaligenes bronchisepticus).